The chain runs to 101 residues: Phosphoribosyl-AMP cyclohydrolase (101 aa).

Asp71 is a Mg(2+) binding site. Position 72 (Cys72) interacts with Zn(2+). 2 residues coordinate Mg(2+): Asp73 and Asp75. The Zn(2+) site is built by Cys88 and Cys95.

This sequence belongs to the PRA-CH family. As to quaternary structure, homodimer. Mg(2+) is required as a cofactor. Zn(2+) serves as cofactor.

It localises to the cytoplasm. It carries out the reaction 1-(5-phospho-beta-D-ribosyl)-5'-AMP + H2O = 1-(5-phospho-beta-D-ribosyl)-5-[(5-phospho-beta-D-ribosylamino)methylideneamino]imidazole-4-carboxamide. It participates in amino-acid biosynthesis; L-histidine biosynthesis; L-histidine from 5-phospho-alpha-D-ribose 1-diphosphate: step 3/9. Catalyzes the hydrolysis of the adenine ring of phosphoribosyl-AMP. The chain is Phosphoribosyl-AMP cyclohydrolase from Bacillus cytotoxicus (strain DSM 22905 / CIP 110041 / 391-98 / NVH 391-98).